A 162-amino-acid chain; its full sequence is Phosphopantetheine adenylyltransferase (162 aa).

Residue S11 participates in substrate binding. Residues 11-12 (SF) and H19 each bind ATP. Substrate is bound by residues K43, V76, and R90. ATP is bound by residues 91–93 (GLR), E101, and 126–132 (HLYISSS).

This sequence belongs to the bacterial CoaD family. Homohexamer. Mg(2+) serves as cofactor.

It localises to the cytoplasm. It carries out the reaction (R)-4'-phosphopantetheine + ATP + H(+) = 3'-dephospho-CoA + diphosphate. The protein operates within cofactor biosynthesis; coenzyme A biosynthesis; CoA from (R)-pantothenate: step 4/5. Reversibly transfers an adenylyl group from ATP to 4'-phosphopantetheine, yielding dephospho-CoA (dPCoA) and pyrophosphate. This chain is Phosphopantetheine adenylyltransferase, found in Streptococcus pneumoniae (strain JJA).